The sequence spans 863 residues: DNA mismatch repair protein MutS (863 aa).

615-622 serves as a coordination point for ATP; that stretch reads GPNMAGKS.

The protein belongs to the DNA mismatch repair MutS family.

This protein is involved in the repair of mismatches in DNA. It is possible that it carries out the mismatch recognition step. This protein has a weak ATPase activity. This is DNA mismatch repair protein MutS from Pelotomaculum thermopropionicum (strain DSM 13744 / JCM 10971 / SI).